The following is a 456-amino-acid chain: Argininosuccinate lyase (456 aa).

Belongs to the lyase 1 family. Argininosuccinate lyase subfamily.

Its subcellular location is the cytoplasm. The catalysed reaction is 2-(N(omega)-L-arginino)succinate = fumarate + L-arginine. Its pathway is amino-acid biosynthesis; L-arginine biosynthesis; L-arginine from L-ornithine and carbamoyl phosphate: step 3/3. The chain is Argininosuccinate lyase from Shewanella woodyi (strain ATCC 51908 / MS32).